A 589-amino-acid chain; its full sequence is 5'-AMP-activated protein kinase catalytic subunit alpha-1 (589 aa).

A Protein kinase domain is found at 24 to 276 (FVIKETIGKG…VKRIVNHSWF (253 aa)). ATP-binding positions include 30–38 (IGKGAFGAV) and lysine 53. Aspartate 147 (proton acceptor) is an active-site residue.

It belongs to the protein kinase superfamily. CAMK Ser/Thr protein kinase family. SNF1 subfamily.

The catalysed reaction is L-seryl-[protein] + ATP = O-phospho-L-seryl-[protein] + ADP + H(+). It carries out the reaction L-threonyl-[protein] + ATP = O-phospho-L-threonyl-[protein] + ADP + H(+). Probably does not act as a sensor that couples lifespan to information about energy levels and insulin-like signals. Together with aak-2, involved in the establishment of germline stem cell (GSC) quiescence during dauer development. Plays a role in the maintenance of glycogen stores which are necessary for resistance to hyperosmotic stress. The protein is 5'-AMP-activated protein kinase catalytic subunit alpha-1 (aak-1) of Caenorhabditis elegans.